A 965-amino-acid polypeptide reads, in one-letter code: MNKKSKINKVMLSISTMALSLGALQAPASAEEKVPYNVLKTKPVGIEKPVDEIGHVSKAEETLSFQERLKVGDFSQRPASIPNKAAVKQVKESYSMADLNKMNDQELVETLGCIKWHQITDLFQFNEDAKAFYKDKGKMQVIIDELAHRGSTFTRDDSKGIQTFTEVLRSAFYLAFYNNELSELNERSFQDKCLPALKAIAKNPNFKLGTAEQDTVVSAYGKLISNASSDVETVQYASNILKQYNDNFNTYVNDRMKGQAIYDIMQGIDYDIQSYLIEARKEANETMWYGKVDGFINEINRIALLNEVTPENKWLVNNGIYFASRLGKFHSNPNKGLEVVTQAMHMYPRLSEPYFVAVEQITTNYNGKDYSGNTVDLEKIRKEGKEQYLPKTYTFDDGSIVFKTGDKVSEEKIKRLYWAAKEVKAQYHRVIGNDKALEPGNADDILTIVIYNSPEEYQLNRQLYGYETNNGGIYIEETGTFFTYERTPEQSIYSLEELFRHEFTHYLQGRYEVPGLFGRGDMYQNERLTWFQEGNAEFFAGSTRTNNVVPRKSIISGLSSDPASRYTAERTLFAKYGSWDFYNYSFALQSYLYTHQFETFDKIQDLIRANDVKNYDAYRENLSKDPKLNKEYQEYMQQLIDNQDKYNVPAVADDYLAEHAPKSLTAVEKEMTETLPMKDAKMTKHSSQFFNTFTLEGTYTGSVTKGESEDWNAMSKKVNEVLEQLAQKEWSGYKTVTAYFVNYRVNSSNEFEYDVVFHGIAKDDGENKAPTVNINGPYNGLVKEGIQFKSDGSKDEDGKIVSYLWDFGDGRTSTEVNPVHVYEREGSYKVALIVKDDKGKESKSETTVTVKDGSLTESEPNNRPEEANRIGLNTTIKGSLIGGDHTDVYTFNVASAKDIDISVLNEYGIGMTWVLHHESDMQNYAAYGQANGNHIEANFNAKPGEYYLYVYKYDNGDGTYKLSVK.

Positions 1–30 (MNKKSKINKVMLSISTMALSLGALQAPASA) are cleaved as a signal peptide. The propeptide occupies 31 to 93 (EEKVPYNVLK…KAAVKQVKES (63 aa)). The interval 94 to 366 (YSMADLNKMN…AVEQITTNYN (273 aa)) is activator domain. Positions 94-765 (YSMADLNKMN…VFHGIAKDDG (672 aa)) are S1 metalloprotease domain. The interval 376–645 (DLEKIRKEGK…MQQLIDNQDK (270 aa)) is catalytic subdomain. Position 501 (His501) interacts with Zn(2+). Residue Glu502 is part of the active site. Positions 505 and 533 each coordinate Zn(2+). The tract at residues 653-765 (DDYLAEHAPK…VFHGIAKDDG (113 aa)) is helper subdomain. In terms of domain architecture, PKD spans 769–850 (APTVNINGPY…ESKSETTVTV (82 aa)). A disordered region spans residues 842-867 (SKSETTVTVKDGSLTESEPNNRPEEA). A compositionally biased stretch (polar residues) spans 845–859 (ETTVTVKDGSLTESE). Residues 853-965 (GSLTESEPNN…GDGTYKLSVK (113 aa)) form a collagen-binding domain region.

The protein belongs to the peptidase M9B family. Collagenase subfamily. Ca(2+) is required as a cofactor. It depends on Zn(2+) as a cofactor.

The protein localises to the secreted. The enzyme catalyses Digestion of native collagen in the triple helical region at Xaa-|-Gly bonds. With synthetic peptides, a preference is shown for Gly at P3 and P1', Pro and Ala at P2 and P2', and hydroxyproline, Ala or Arg at P3'.. Strongly inhibited by EDTA. Not inhibited by E-64 and PMSF, broad-spectrum cysteine and serine protease inhibitors. In terms of biological role, acts as a true collagenase, which is highly active and cleaves natively folded collagen. In vitro, can also cleave gelatin and the synthetic peptide FALGPA (furylacryloyl-Leu-Gly-Pro-Ala). Causes damage on dermal collagen (COL), resulting in gaps in the tissue, which might lead to an accelerated bacterial infiltration and penetration into deeper sites of the host. The chain is Collagenase ColQ1 from Bacillus cereus (strain Q1).